Consider the following 512-residue polypeptide: Pantothenate transporter FEN2 (512 aa).

Residues 1–27 lie on the Cytoplasmic side of the membrane; sequence MMKESKSITQHEVERESVSSKRAIKKR. Residues 28-48 traverse the membrane as a helical segment; sequence LLLFKIDLFVLSFVCLQYWIN. Topologically, residues 49-79 are extracellular; the sequence is YVDRVGFTNAYISGMKEDLKMVGNDLTVSNT. A helical transmembrane segment spans residues 80 to 100; that stretch reads VFMIGYIVGMVPNNLMLLCVP. Residues 101 to 102 are Cytoplasmic-facing; it reads PR. Residues 103–123 form a helical membrane-spanning segment; it reads IWLSFCTFAWGLLTLGMYKVT. The Extracellular portion of the chain corresponds to 124–132; that stretch reads SFKHICAIR. A helical membrane pass occupies residues 133 to 153; it reads FFQALFESCTFSGTHFVLGSW. Over 154-164 the chain is Cytoplasmic; sequence YKEDELPIRSA. A helical transmembrane segment spans residues 165–185; sequence IFTGSGLVGSMFSGFMQTSIF. Over 186-198 the chain is Extracellular; that stretch reads THLNGRNGLAGWR. Residues 199–219 form a helical membrane-spanning segment; that stretch reads WLFIIDFCITLPIAIYGFIFF. At 220-271 the chain is on the cytoplasmic side; sequence PGLPDQTSAVSKFSMTRYIFNEQELHYARRRLPARDESTRLDWSTIPRVLKR. The chain crosses the membrane as a helical span at residues 272-292; the sequence is WHWWMFSLVWVLGGENLGFAS. At 293–312 the chain is on the extracellular side; that stretch reads NSTFALWLQNQKYTLAQRNN. The chain crosses the membrane as a helical span at residues 313–333; the sequence is YPSGIFAVGIVSTLCSAVYMS. The Cytoplasmic segment spans residues 334–342; the sequence is KIPRARHWH. A helical transmembrane segment spans residues 343-363; the sequence is VSVFISLVMVIVAVLIRADPL. Residues 364 to 372 are Extracellular-facing; it reads NPKVVFSAQ. A helical transmembrane segment spans residues 373–393; the sequence is YLGGVAYAGQAVFFSWANIIC. The Cytoplasmic portion of the chain corresponds to 394 to 401; it reads HADLQERA. Residues 402–422 form a helical membrane-spanning segment; the sequence is IVLASMNMFSGAVNAWWSILF. Over 423 to 434 the chain is Extracellular; that stretch reads FASDMVPKFERG. The chain crosses the membrane as a helical span at residues 435-455; that stretch reads CYALLATAISSGIVSVVIRSL. The Cytoplasmic segment spans residues 456-512; that stretch reads QIKENLSKKQVPYIDANDMPGEDDDDDNQDNENDGDDESMEVELHNEEMAEISNPFR. The disordered stretch occupies residues 468–512; sequence YIDANDMPGEDDDDDNQDNENDGDDESMEVELHNEEMAEISNPFR. Acidic residues predominate over residues 475–496; sequence PGEDDDDDNQDNENDGDDESME.

This sequence belongs to the major facilitator superfamily. Allantoate permease family.

Its subcellular location is the cell membrane. Transports pantothenate into the cell. Also involved in the catabolite repression-mediated regulation of ergosterol biosynthesis and in fenpropimorph resistance. This chain is Pantothenate transporter FEN2 (FEN2), found in Saccharomyces cerevisiae (strain ATCC 204508 / S288c) (Baker's yeast).